An 874-amino-acid polypeptide reads, in one-letter code: Coatomer subunit gamma-1 (874 aa).

A compositionally biased stretch (basic and acidic residues) spans 1 to 11 (MLKKFDKKDEE). Residues 1-21 (MLKKFDKKDEESGGGSNPLQH) form a disordered region. 4 HEAT repeats span residues 64–101 (TEAT…IAED), 283–320 (KELA…KHPS), 322–355 (VTAC…GSES), and 356–392 (SIDR…KYPR). Thr-594 carries the post-translational modification Phosphothreonine. The interaction with ZNF289/ARFGAP2 stretch occupies residues 609–874 (RQEIFQEQLA…PVDIILASVG (266 aa)).

It belongs to the COPG family. In terms of assembly, oligomeric complex that consists of at least the alpha, beta, beta', gamma, delta, epsilon and zeta subunits. Interacts with ZNF289/ARFGAP2 through its C-terminal appendage domain. Interacts with EGFR upon EGF treatment; interaction is essential for regulation of EGF-dependent nuclear transport of EGFR by retrograde trafficking from the Golgi to the ER. The coatomer interacts with KDEL receptors; the interaction is important for retrograde trafficking of KDEL-bearing proteins from the Golgi to the endoplasmic reticulum. Interacts with COPB1. Interacts with TMED10 (via C-terminus). Interacts with TMED2, TMED3, TMED7 and TMED9.

Its subcellular location is the cytoplasm. It localises to the cytosol. The protein resides in the golgi apparatus membrane. The protein localises to the cytoplasmic vesicle. It is found in the COPI-coated vesicle membrane. Functionally, the coatomer is a cytosolic protein complex that binds to dilysine motifs and reversibly associates with Golgi non-clathrin-coated vesicles, which further mediate biosynthetic protein transport from the ER, via the Golgi up to the trans Golgi network. Coatomer complex is required for budding from Golgi membranes, and is essential for the retrograde Golgi-to-ER transport of dilysine-tagged proteins. In mammals, the coatomer can only be recruited by membranes associated to ADP-ribosylation factors (ARFs), which are small GTP-binding proteins; the complex also influences the Golgi structural integrity, as well as the processing, activity, and endocytic recycling of LDL receptors. Required for limiting lipid storage in lipid droplets. Involved in lipid homeostasis by regulating the presence of perilipin family members PLIN2 and PLIN3 at the lipid droplet surface and promoting the association of adipocyte triglyceride lipase (PNPLA2) with the lipid droplet surface to mediate lipolysis. This chain is Coatomer subunit gamma-1 (Copg1), found in Mus musculus (Mouse).